The sequence spans 62 residues: Conotoxin Im5.1 (62 aa).

A signal peptide spans 1 to 19 (MYCLPVFIILLLLISSAPS). Residues 20-48 (TPPQPRNKDRVHLISLLDNHKQILQRDWN) constitute a propeptide that is removed on maturation. Trp-60 is modified (tryptophan amide).

The protein belongs to the conotoxin T superfamily. In terms of processing, contains 2 disulfide bonds that can be either 'C1-C3, C2-C4' or 'C1-C4, C2-C3', since these disulfide connectivities have been observed for conotoxins with cysteine framework V (for examples, see AC P0DQQ7 and AC P81755). As to expression, expressed by the venom duct.

The protein localises to the secreted. This Conus imperialis (Imperial cone) protein is Conotoxin Im5.1.